A 486-amino-acid chain; its full sequence is MNTQQLAKLRSIVPEMHRVRHIHFVGIGGAGMGGIAEVLANEGYEISGSDLAPNAVTQQLTELGAQIYFHHRAENVLNASVVVVSSAITADNPEIVAAHDARIPVIRRAEMLAELMRFRHGIAIAGTHGKTTTTAMVTSIYAEAGLDPTFVNGGLVKAAGTHARLGSSRYLIAEADESDASFLHLQPMVAIVTNIEADHMDTYQGDFENLKQTFINFLHNLPFYGQAVMCIDDAVIRELLPRVGRHITTYGFSDDADVRVSGYRQVGAQGHFTLERKDKPLLTVTLNAPGRHNALNAAAAVAVATDEGIDDEAILRALERFQGTGRRFDFLGEYPLELVNGQSGTAMLVDDYGHHPTEVDATIKAARAGWPDKRLVMIFQPHRYTRTRDLYDDFAHVLSQVDVLLMLDVYSAGESPIPGADSRSLCRTIRGRGKIDPILVTDVDTLPELLSQALRGEDLILVQGAGNIGKLARKLADSRLQPQISE.

ATP is bound at residue 126-132; sequence GTHGKTT.

The protein belongs to the MurCDEF family.

The protein resides in the cytoplasm. It carries out the reaction UDP-N-acetyl-alpha-D-muramate + L-alanine + ATP = UDP-N-acetyl-alpha-D-muramoyl-L-alanine + ADP + phosphate + H(+). It participates in cell wall biogenesis; peptidoglycan biosynthesis. Functionally, cell wall formation. This is UDP-N-acetylmuramate--L-alanine ligase from Pectobacterium carotovorum subsp. carotovorum (strain PC1).